The following is a 56-amino-acid chain: Large ribosomal subunit protein bL32 (56 aa).

The segment covering 1–16 has biased composition (basic residues); that stretch reads MAVQKSKKSRAARGMR. Residues 1 to 22 are disordered; sequence MAVQKSKKSRAARGMRRSHDAL.

This sequence belongs to the bacterial ribosomal protein bL32 family.

This Photobacterium profundum (strain SS9) protein is Large ribosomal subunit protein bL32.